The sequence spans 368 residues: Alanine racemase (368 aa).

The active-site Proton acceptor; specific for D-alanine is the Lys-40. Lys-40 is subject to N6-(pyridoxal phosphate)lysine. Arg-134 contributes to the substrate binding site. The active-site Proton acceptor; specific for L-alanine is the Tyr-263. Position 310 (Met-310) interacts with substrate.

Belongs to the alanine racemase family. Pyridoxal 5'-phosphate is required as a cofactor.

The enzyme catalyses L-alanine = D-alanine. Its pathway is amino-acid biosynthesis; D-alanine biosynthesis; D-alanine from L-alanine: step 1/1. Its function is as follows. Catalyzes the interconversion of L-alanine and D-alanine. May also act on other amino acids. The polypeptide is Alanine racemase (alr) (Listeria innocua serovar 6a (strain ATCC BAA-680 / CLIP 11262)).